The following is a 225-amino-acid chain: Protein-L-isoaspartate O-methyltransferase (225 aa).

S-adenosyl-L-homocysteine-binding positions include 57–60 (ATVS), H65, S89, 110–111 (EH), 142–143 (DG), T216, and Q221. S60 is a catalytic residue.

This sequence belongs to the methyltransferase superfamily. L-isoaspartyl/D-aspartyl protein methyltransferase family. Monomer.

Its subcellular location is the cytoplasm. The protein resides in the cytosol. The catalysed reaction is [protein]-L-isoaspartate + S-adenosyl-L-methionine = [protein]-L-isoaspartate alpha-methyl ester + S-adenosyl-L-homocysteine. Functionally, initiates the repair of damaged proteins by catalyzing methyl esterification of L-isoaspartyl and D-aspartyl residues produced by spontaneous isomerization and racemization of L-aspartyl and L-asparaginyl residues in aging peptides and proteins. The sequence is that of Protein-L-isoaspartate O-methyltransferase (pcm-1) from Caenorhabditis elegans.